The sequence spans 1343 residues: DNA-directed RNA polymerase subunit beta (1343 aa).

The protein belongs to the RNA polymerase beta chain family. As to quaternary structure, the RNAP catalytic core consists of 2 alpha, 1 beta, 1 beta' and 1 omega subunit. When a sigma factor is associated with the core the holoenzyme is formed, which can initiate transcription.

The enzyme catalyses RNA(n) + a ribonucleoside 5'-triphosphate = RNA(n+1) + diphosphate. DNA-dependent RNA polymerase catalyzes the transcription of DNA into RNA using the four ribonucleoside triphosphates as substrates. This is DNA-directed RNA polymerase subunit beta from Shewanella loihica (strain ATCC BAA-1088 / PV-4).